Here is a 165-residue protein sequence, read N- to C-terminus: Interferon gamma (165 aa).

The signal sequence occupies residues 1-23 (MKYTSYILAFQLCIVLGSLGCYC). Q24 is subject to Pyrrolidone carboxylic acid. 2 N-linked (GlcNAc...) asparagine glycosylation sites follow: N48 and N120.

It belongs to the type II (or gamma) interferon family. In terms of assembly, homodimer. Interacts with IFNGR1 (via extracellular domain); this interaction promotes IFNGR1 dimerization. As to expression, released primarily from activated T lymphocytes.

The protein localises to the secreted. Its function is as follows. Type II interferon produced by immune cells such as T-cells and NK cells that plays crucial roles in antimicrobial, antiviral, and antitumor responses by activating effector immune cells and enhancing antigen presentation. Primarily signals through the JAK-STAT pathway after interaction with its receptor IFNGR1 to affect gene regulation. Upon IFNG binding, IFNGR1 intracellular domain opens out to allow association of downstream signaling components JAK2, JAK1 and STAT1, leading to STAT1 activation, nuclear translocation and transcription of IFNG-regulated genes. Many of the induced genes are transcription factors such as IRF1 that are able to further drive regulation of a next wave of transcription. Plays a role in class I antigen presentation pathway by inducing a replacement of catalytic proteasome subunits with immunoproteasome subunits. In turn, increases the quantity, quality, and repertoire of peptides for class I MHC loading. Increases the efficiency of peptide generation also by inducing the expression of activator PA28 that associates with the proteasome and alters its proteolytic cleavage preference. Up-regulates as well MHC II complexes on the cell surface by promoting expression of several key molecules such as cathepsins B/CTSB, H/CTSH, and L/CTSL. Participates in the regulation of hematopoietic stem cells during development and under homeostatic conditions by affecting their development, quiescence, and differentiation. The sequence is that of Interferon gamma (IFNG) from Cercocebus atys (Sooty mangabey).